Consider the following 141-residue polypeptide: Large ribosomal subunit protein uL11B (141 aa).

It belongs to the universal ribosomal protein uL11 family. As to quaternary structure, part of the ribosomal stalk of the 50S ribosomal subunit. Interacts with L10 and the large rRNA to form the base of the stalk. L10 forms an elongated spine to which L12 dimers bind in a sequential fashion forming a multimeric L10(L12)X complex. Post-translationally, one or more lysine residues are methylated.

Its function is as follows. Forms part of the ribosomal stalk which helps the ribosome interact with GTP-bound translation factors. This Halalkalibacterium halodurans (strain ATCC BAA-125 / DSM 18197 / FERM 7344 / JCM 9153 / C-125) (Bacillus halodurans) protein is Large ribosomal subunit protein uL11B.